Consider the following 372-residue polypeptide: NAD(P)H-quinone oxidoreductase subunit 1 (372 aa).

A run of 9 helical transmembrane segments spans residues 27 to 47 (AIWM…GVLV), 65 to 85 (PEYI…KLVF), 97 to 117 (WLFT…YLIV), 128 to 148 (IGTG…GLLM), 166 to 186 (AAQS…IVMM), 204 to 224 (ILGW…IAAL), 266 to 286 (VLSA…PIPI), 308 to 328 (ALGI…AILL), and 347 to 367 (FLLP…LAFP).

Belongs to the complex I subunit 1 family. NDH-1 is composed of at least 11 different subunits.

The protein localises to the cellular thylakoid membrane. The catalysed reaction is a plastoquinone + NADH + (n+1) H(+)(in) = a plastoquinol + NAD(+) + n H(+)(out). It carries out the reaction a plastoquinone + NADPH + (n+1) H(+)(in) = a plastoquinol + NADP(+) + n H(+)(out). Its function is as follows. NDH-1 shuttles electrons from an unknown electron donor, via FMN and iron-sulfur (Fe-S) centers, to quinones in the respiratory and/or the photosynthetic chain. The immediate electron acceptor for the enzyme in this species is believed to be plastoquinone. Couples the redox reaction to proton translocation, and thus conserves the redox energy in a proton gradient. This is NAD(P)H-quinone oxidoreductase subunit 1 from Trichormus variabilis (strain ATCC 29413 / PCC 7937) (Anabaena variabilis).